A 185-amino-acid polypeptide reads, in one-letter code: Ribosome-recycling factor (185 aa).

This sequence belongs to the RRF family.

The protein resides in the cytoplasm. Functionally, responsible for the release of ribosomes from messenger RNA at the termination of protein biosynthesis. May increase the efficiency of translation by recycling ribosomes from one round of translation to another. The protein is Ribosome-recycling factor of Streptococcus sanguinis (strain SK36).